Here is a 260-residue protein sequence, read N- to C-terminus: Myb transcription factor 42 (260 aa).

HTH myb-type domains are found at residues 9–61 (KAHT…INYL) and 62–116 (RPDL…RRKL). DNA-binding regions (H-T-H motif) lie at residues 37–61 (WRSL…INYL) and 89–112 (WSLI…NTHI).

In terms of tissue distribution, mainly expressed in the aerial parts and, to a lower extent, in roots.

The protein resides in the nucleus. Its function is as follows. Transcription factor that negatively regulates the expression of caffeic acid O-methyl-transferase genes (COMTs) and of other genes involved in the biosynthesis of lignin, thus preventing lignification. This chain is Myb transcription factor 42, found in Zea mays (Maize).